The chain runs to 562 residues: Actin-related protein 8 (562 aa).

Residue 248–251 participates in ATP binding; that stretch reads DVGD.

It belongs to the actin family. ARP8 subfamily. In terms of assembly, component of the chromatin remodeling Ino80 complex. Exists as monomers and dimers, but the dimer is most probably the biologically relevant form required for stable interactions with histones that exploits the twofold symmetry of the nucleosome core.

It is found in the nucleus. Functionally, plays an important role in the functional organization of mitotic chromosomes. Exhibits low basal ATPase activity, and unable to polymerize. In terms of biological role, proposed core component of the chromatin remodeling INO80 complex which is involved in transcriptional regulation, DNA replication and probably DNA repair. Strongly prefer nucleosomes and H3-H4 tetramers over H2A-H2B dimers, suggesting it may act as a nucleosome recognition module within the complex. This Aedes aegypti (Yellowfever mosquito) protein is Actin-related protein 8.